Consider the following 102-residue polypeptide: Small ribosomal subunit protein bS20 (102 aa).

It belongs to the bacterial ribosomal protein bS20 family.

Its function is as follows. Binds directly to 16S ribosomal RNA. In Gloeobacter violaceus (strain ATCC 29082 / PCC 7421), this protein is Small ribosomal subunit protein bS20.